Consider the following 40-residue polypeptide: Alpha-conotoxin-like Qc1.4b (40 aa).

Residues 1 to 19 constitute a propeptide that is removed on maturation; the sequence is SDGRNTAANDKASDLMALR. Intrachain disulfides connect cysteine 22-cysteine 28 and cysteine 23-cysteine 36. A lacks the Ser-Xaa-Pro motif that is crucial for potent interaction with nAChR region spans residues 24–26; that stretch reads PNP. The residue at position 36 (cysteine 36) is a Cysteine amide. Positions 37–40 are excised as a propeptide; it reads GGGR.

It belongs to the conotoxin A superfamily. Expressed by the venom duct.

The protein localises to the secreted. In terms of biological role, alpha-conotoxins act on postsynaptic membranes, they bind to the nicotinic acetylcholine receptors (nAChR) and thus inhibit them. Has possibly a distinct nAChR binding mode from other alpha-conotoxins, due to a different three residue motif (lacks the Ser-Xaa-Pro motif). The sequence is that of Alpha-conotoxin-like Qc1.4b from Conus quercinus (Oak cone).